The chain runs to 348 residues: Small ribosomal subunit biogenesis GTPase RsgA (348 aa).

Positions 1 to 14 (MAKRKLSKQQKWRI) are enriched in basic residues. The tract at residues 1-39 (MAKRKLSKQQKWRIQKIQDERTKRATRKETQLESQLSGG) is disordered. Positions 16 to 31 (KIQDERTKRATRKETQ) are enriched in basic and acidic residues. Positions 116–275 (FGQLKPIAAN…LIDSPGIREF (160 aa)) constitute a CP-type G domain. GTP contacts are provided by residues 163–166 (NKQD) and 217–225 (GQSGVGKSS). Zn(2+) is bound by residues C299, C304, H306, and C312.

The protein belongs to the TRAFAC class YlqF/YawG GTPase family. RsgA subfamily. As to quaternary structure, monomer. Associates with 30S ribosomal subunit, binds 16S rRNA. Zn(2+) is required as a cofactor.

The protein localises to the cytoplasm. Its function is as follows. One of several proteins that assist in the late maturation steps of the functional core of the 30S ribosomal subunit. Helps release RbfA from mature subunits. May play a role in the assembly of ribosomal proteins into the subunit. Circularly permuted GTPase that catalyzes slow GTP hydrolysis, GTPase activity is stimulated by the 30S ribosomal subunit. In Hahella chejuensis (strain KCTC 2396), this protein is Small ribosomal subunit biogenesis GTPase RsgA.